We begin with the raw amino-acid sequence, 279 residues long: Protein CMSS1 (279 aa).

A compositionally biased stretch (acidic residues) spans 1–10 (MADDLGDEWW). Residues 1–89 (MADDLGDEWW…DVLAKSEPKP (89 aa)) form a disordered region. A compositionally biased stretch (polar residues) spans 12-22 (NQPTGAGSSPE). Residues Ser19 and Ser24 each carry the phosphoserine modification. At Arg167 the chain carries Omega-N-methylarginine. Phosphothreonine is present on Thr212.

Belongs to the CMS1 family.

This chain is Protein CMSS1 (CMSS1), found in Homo sapiens (Human).